We begin with the raw amino-acid sequence, 411 residues long: 2,3-bisphosphoglycerate-independent phosphoglycerate mutase (411 aa).

It belongs to the BPG-independent phosphoglycerate mutase family. A-PGAM subfamily.

The catalysed reaction is (2R)-2-phosphoglycerate = (2R)-3-phosphoglycerate. The protein operates within carbohydrate degradation; glycolysis; pyruvate from D-glyceraldehyde 3-phosphate: step 3/5. In terms of biological role, catalyzes the interconversion of 2-phosphoglycerate and 3-phosphoglycerate. This is 2,3-bisphosphoglycerate-independent phosphoglycerate mutase from Pyrobaculum calidifontis (strain DSM 21063 / JCM 11548 / VA1).